We begin with the raw amino-acid sequence, 266 residues long: Undecaprenyl-diphosphatase (266 aa).

The next 8 helical transmembrane spans lie at 4–24, 41–61, 80–100, 105–125, 139–159, 182–202, 212–232, and 245–265; these read WVLA…PVSS, GKVF…SVYF, FVAS…LLHD, VLFE…FALL, AGAF…LALI, AAEF…TVDL, DDAG…IITV, and APFA…LAFI.

This sequence belongs to the UppP family.

It is found in the cell inner membrane. The catalysed reaction is di-trans,octa-cis-undecaprenyl diphosphate + H2O = di-trans,octa-cis-undecaprenyl phosphate + phosphate + H(+). Catalyzes the dephosphorylation of undecaprenyl diphosphate (UPP). Confers resistance to bacitracin. This chain is Undecaprenyl-diphosphatase, found in Phenylobacterium zucineum (strain HLK1).